The chain runs to 397 residues: Ubiquitin-like modifier-activating enzyme 5 (397 aa).

Residues G76, D97, K120, N143, and N177 each contribute to the ATP site. The Zn(2+) site is built by C219 and C222. C243 (glycyl thioester intermediate) is an active-site residue. Zn(2+) is bound by residues C296 and C301. Positions P343–D384 are disordered.

It belongs to the ubiquitin-activating E1 family. UBA5 subfamily.

In terms of biological role, E1-like enzyme which activates UFM1. In Drosophila pseudoobscura pseudoobscura (Fruit fly), this protein is Ubiquitin-like modifier-activating enzyme 5.